The chain runs to 169 residues: S-ribosylhomocysteine lyase (169 aa).

Fe cation contacts are provided by His54, His58, and Cys129.

It belongs to the LuxS family. In terms of assembly, homodimer. The cofactor is Fe cation.

The enzyme catalyses S-(5-deoxy-D-ribos-5-yl)-L-homocysteine = (S)-4,5-dihydroxypentane-2,3-dione + L-homocysteine. Involved in the synthesis of autoinducer 2 (AI-2) which is secreted by bacteria and is used to communicate both the cell density and the metabolic potential of the environment. The regulation of gene expression in response to changes in cell density is called quorum sensing. Catalyzes the transformation of S-ribosylhomocysteine (RHC) to homocysteine (HC) and 4,5-dihydroxy-2,3-pentadione (DPD). The protein is S-ribosylhomocysteine lyase of Haemophilus ducreyi (strain 35000HP / ATCC 700724).